A 415-amino-acid polypeptide reads, in one-letter code: Phosphoglycerate kinase (415 aa).

Substrate contacts are provided by residues 24-26, R43, 66-69, R125, and R165; these read DLN and HLGR. ATP-binding positions include K215, G303, E334, and 363–366; that span reads GGDS.

This sequence belongs to the phosphoglycerate kinase family. In terms of assembly, monomer.

It is found in the cytoplasm. It catalyses the reaction (2R)-3-phosphoglycerate + ATP = (2R)-3-phospho-glyceroyl phosphate + ADP. The protein operates within carbohydrate degradation; glycolysis; pyruvate from D-glyceraldehyde 3-phosphate: step 2/5. The sequence is that of Phosphoglycerate kinase from Mycobacterium avium (strain 104).